We begin with the raw amino-acid sequence, 176 residues long: Small ribosomal subunit protein uS5 (176 aa).

One can recognise an S5 DRBM domain in the interval 18–81; it reads FEEKMLFVNR…SIARKNMISV (64 aa).

The protein belongs to the universal ribosomal protein uS5 family. Part of the 30S ribosomal subunit. Contacts proteins S4 and S8.

In terms of biological role, with S4 and S12 plays an important role in translational accuracy. Functionally, located at the back of the 30S subunit body where it stabilizes the conformation of the head with respect to the body. The protein is Small ribosomal subunit protein uS5 of Deinococcus deserti (strain DSM 17065 / CIP 109153 / LMG 22923 / VCD115).